The primary structure comprises 276 residues: MESTIGIDAGGTLTKIAYLNEKMQLAFEKFYSNEQNKIIDWLKQNTGKKQICITGGKAKQLQQLLSNSYKIVELNEFEATLIGVRYILKEEKYDINNFILTNIGTGTSIHYVYNDQYIRAGGTGVGGGTIMGLSKLLTNLEHFEDVIPLTKVGSRKELDITVGDIYGGILSPIDNSLTASNFGKAATIESNYNSSDILATVQGLVGEVVTALSLQFAETKNIDHIIYIGSTLCNNIHLQNIISSYTKYQNKIPIFLQDGGNSGAIGALLHVANKKS.

Position 8–15 (8–15) interacts with ATP; sequence DAGGTLTK. Catalysis depends on E76, which acts as the Proton acceptor. ATP-binding positions include T105, 127–131, F143, and S230; that span reads GGTIM.

This sequence belongs to the type II pantothenate kinase family. Homodimer.

Its subcellular location is the cytoplasm. It catalyses the reaction (R)-pantothenate + ATP = (R)-4'-phosphopantothenate + ADP + H(+). It functions in the pathway cofactor biosynthesis; coenzyme A biosynthesis; CoA from (R)-pantothenate: step 1/5. Functionally, catalyzes the phosphorylation of pantothenate (Pan), the first step in CoA biosynthesis. This Bacillus cereus (strain ATCC 10987 / NRS 248) protein is Type II pantothenate kinase.